The following is a 243-amino-acid chain: Probable 6-oxopurine nucleoside phosphorylase (243 aa).

Residues Thr-8 and 48–49 (RH) each bind phosphate. Met-174 serves as a coordination point for substrate. Thr-175 serves as a coordination point for phosphate. 198-200 (NYA) lines the substrate pocket.

Belongs to the PNP/MTAP phosphorylase family. MTAP subfamily. In terms of assembly, homohexamer. Dimer of a homotrimer.

It catalyses the reaction a purine D-ribonucleoside + phosphate = a purine nucleobase + alpha-D-ribose 1-phosphate. It functions in the pathway purine metabolism; purine nucleoside salvage. Purine nucleoside phosphorylase which is highly specific for 6-oxopurine nucleosides. Cleaves guanosine or inosine to respective bases and sugar-1-phosphate molecules. Involved in purine salvage. In Archaeoglobus fulgidus (strain ATCC 49558 / DSM 4304 / JCM 9628 / NBRC 100126 / VC-16), this protein is Probable 6-oxopurine nucleoside phosphorylase.